The primary structure comprises 5104 residues: Malformin synthetase mlfA (5104 aa).

Residues 225–616 (ERHAVNRPHS…CGRADTQVKL (392 aa)) form an adenylation 1 region. The region spanning 757-830 (SRLEQEIQLA…EAASLAEVQE (74 aa)) is the Carrier 1 domain. An O-(pantetheine 4'-phosphoryl)serine modification is found at Ser791. The segment at 868-1299 (EDVFPCTTMQ…ALNTLSLLQA (432 aa)) is condensation 1. The interval 1327–1716 (DRWVTRQPEG…GRKDTQVKLR (390 aa)) is adenylation 2. Residues 1854–1931 (TPASELERTL…QLAAEFGGPA (78 aa)) enclose the Carrier 2 domain. Ser1891 is modified (O-(pantetheine 4'-phosphoryl)serine). Disordered stretches follow at residues 1928–1961 (GGPA…DGVD) and 1998–2025 (TNKT…KVDS). Low complexity-rich tracts occupy residues 1934–1958 (SASS…STND) and 2003–2013 (SVSSSSSSSSS). Residues 2066 to 2481 (EDIYPATPLQ…TVSYSDKEAL (416 aa)) form a condensation 2 region. Positions 2504–2896 (VRTPHAPAVC…IGRRDGQLKL (393 aa)) are adenylation 3. Positions 3032–3108 (RPVTSQEREM…QLICHLNTIR (77 aa)) constitute a Carrier 3 domain. At Ser3069 the chain carries O-(pantetheine 4'-phosphoryl)serine. Condensation regions lie at residues 3125–3590 (WVAL…TYDQ) and 3611–4029 (NIYP…EQLV). The adenylation 4 stretch occupies residues 4054–4444 (HSSREAVCAW…VGRKDNQIKF (391 aa)). The 77-residue stretch at 4578 to 4654 (MPSTAAERKM…DLSDQARSLI (77 aa)) folds into the Carrier 4 domain. Position 4615 is an O-(pantetheine 4'-phosphoryl)serine (Ser4615). A condensation 5 region spans residues 4691–5018 (DVLPTTSFQR…LQTIVQHQNN (328 aa)).

It belongs to the NRP synthetase family.

It participates in secondary metabolite biosynthesis. Nonribosomal peptide synthetase; part of the gene cluster that mediates the biosynthesis of malformins, cyclic pentapeptides with a disulfide bond between 2 consecutive cysteins, that show potential anti-tumor as well as antimalarial and antitrypanosomal properties. The nonribosomal peptide synthetase mlfA is responsible of the formation of the cyclic pentapeptide. The malformin biosynthesis clusters in malformin-producing fungi also contain enzymes involved in the formation of the disulfide bond between the two consecutive cysteins within malformins, in addition to additional tailoring enzymes such as methyltransferases or oxidoreductases. They are also composed of up to 4 major facilitator superfamily transporters, and transcription factors probably involved in the regulation of the expression of those clusters. The polypeptide is Malformin synthetase mlfA (Aspergillus vadensis (strain CBS 113365 / IMI 142717 / IBT 24658)).